The following is a 463-amino-acid chain: O-phospho-L-seryl-tRNA:Cys-tRNA synthase 2 (463 aa).

Pyridoxal 5'-phosphate contacts are provided by residues 154–155 (AR), Asn259, and 282–284 (SGH). The residue at position 285 (Lys285) is an N6-(pyridoxal phosphate)lysine.

This sequence belongs to the SepCysS family. As to quaternary structure, homodimer. Interacts with SepRS. Pyridoxal 5'-phosphate is required as a cofactor.

It carries out the reaction O-phospho-L-seryl-tRNA(Cys) + hydrogen sulfide + H(+) = L-cysteinyl-tRNA(Cys) + phosphate. Its function is as follows. Converts O-phospho-L-seryl-tRNA(Cys) (Sep-tRNA(Cys)) to L-cysteinyl-tRNA(Cys) (Cys-tRNA(Cys)). The sequence is that of O-phospho-L-seryl-tRNA:Cys-tRNA synthase 2 from Methanocella arvoryzae (strain DSM 22066 / NBRC 105507 / MRE50).